Here is a 138-residue protein sequence, read N- to C-terminus: Translation initiation factor 2 subunit beta (138 aa).

Belongs to the eIF-2-beta/eIF-5 family. As to quaternary structure, heterotrimer composed of an alpha, a beta and a gamma chain.

Its function is as follows. eIF-2 functions in the early steps of protein synthesis by forming a ternary complex with GTP and initiator tRNA. The sequence is that of Translation initiation factor 2 subunit beta from Methanococcus maripaludis (strain DSM 14266 / JCM 13030 / NBRC 101832 / S2 / LL).